Reading from the N-terminus, the 125-residue chain is Protein ApaG (125 aa).

In terms of domain architecture, ApaG spans 1–125; it reads MINSPRVCIQ…FRLAVPTLIH (125 aa).

The polypeptide is Protein ApaG (Escherichia coli (strain SE11)).